The primary structure comprises 136 residues: Glutamate-rich protein 4 (136 aa).

The interval 92–136 (EEEEEEEQEEKSCVEENKGPEEKQDEERSRSSYPAQRLPDFGMTI) is disordered. The segment covering 101–121 (EKSCVEENKGPEEKQDEERSR) has biased composition (basic and acidic residues).

The sequence is that of Glutamate-rich protein 4 (Erich4) from Mus musculus (Mouse).